Here is a 330-residue protein sequence, read N- to C-terminus: Polyprenal reductase (330 aa).

Topologically, residues 1 to 16 (MAGWAGAELSVLNPLR) are cytoplasmic. The chain crosses the membrane as a helical span at residues 17-37 (ALWLLLAAAFLLALLLQLAPA). Over 38–89 (RLLPSCALFQDLIRYGKTKQSGSRRPAVCRAFDVPKRYFSHFYVVSVLWNGS) the chain is Lumenal. The helical transmembrane segment at 90 to 110 (LLWFLSQSLFLGAPFPSWLWA) threads the bilayer. Over 111–136 (LLRTLGVTQFQALGMESKASRIQGKK) the chain is Cytoplasmic. The helical transmembrane segment at 137–157 (LALSTFLVLVFLWVHSLRRLF) threads the bilayer. The Lumenal segment spans residues 158–169 (ECFYVSVFSNTA). Residues 170–190 (IHVVQYCFGLVYYVLVGLTVL) form a helical membrane-spanning segment. The Cytoplasmic segment spans residues 191 to 206 (SQVPMNDKNVYALGKN). Residues 207 to 227 (LLLQARWFHILGMMMFFWSSA) traverse the membrane as a helical segment. Over 228-277 (HQYKCHVILSNLRRNKKGVVIHCQHRIPFGDWFEYVSSANYLAELMIYIS) the chain is Lumenal. The helical transmembrane segment at 278-298 (MAVTFGLHNVTWWLVVTYVFF) threads the bilayer. The Cytoplasmic segment spans residues 299-330 (SQALSAFFNHRFYKSTFVSYPKHRKAFLPFLF).

It belongs to the steroid 5-alpha reductase family. Polyprenal reductase subfamily. Expressed in the 2 tissues tested i.e. testis and liver.

The protein resides in the endoplasmic reticulum membrane. The catalysed reaction is a di-trans,poly-cis-dolichal + NADP(+) = a di-trans,poly-cis-polyprenal + NADPH + H(+). It catalyses the reaction a 3-oxo-5alpha-steroid + NADP(+) = a 3-oxo-Delta(4)-steroid + NADPH + H(+). The enzyme catalyses androst-4-ene-3,17-dione + NADPH + H(+) = 5alpha-androstan-3,17-dione + NADP(+). It carries out the reaction 17beta-hydroxy-5alpha-androstan-3-one + NADP(+) = testosterone + NADPH + H(+). It functions in the pathway protein modification; protein glycosylation. Plays a key role in early steps of protein N-linked glycosylation by being involved in the conversion of polyprenol into dolichol. Acts as a polyprenal reductase that mediates the reduction of polyprenal into dolichal in a NADP-dependent mechanism. Dolichols are required for the synthesis of dolichol-linked monosaccharides and the oligosaccharide precursor used for N-glycosylation. Also able to convert testosterone (T) into 5-alpha-dihydrotestosterone (DHT). This chain is Polyprenal reductase, found in Rattus norvegicus (Rat).